Consider the following 223-residue polypeptide: Phosphoribosylformylglycinamidine synthase subunit PurQ (223 aa).

Residues 3-223 (SAVVQLPGLN…FASALDVIAA (221 aa)) form the Glutamine amidotransferase type-1 domain. Cysteine 86 acts as the Nucleophile in catalysis. Residues histidine 196 and glutamate 198 contribute to the active site.

Part of the FGAM synthase complex composed of 1 PurL, 1 PurQ and 2 PurS subunits.

Its subcellular location is the cytoplasm. It catalyses the reaction N(2)-formyl-N(1)-(5-phospho-beta-D-ribosyl)glycinamide + L-glutamine + ATP + H2O = 2-formamido-N(1)-(5-O-phospho-beta-D-ribosyl)acetamidine + L-glutamate + ADP + phosphate + H(+). The catalysed reaction is L-glutamine + H2O = L-glutamate + NH4(+). Its pathway is purine metabolism; IMP biosynthesis via de novo pathway; 5-amino-1-(5-phospho-D-ribosyl)imidazole from N(2)-formyl-N(1)-(5-phospho-D-ribosyl)glycinamide: step 1/2. Its function is as follows. Part of the phosphoribosylformylglycinamidine synthase complex involved in the purines biosynthetic pathway. Catalyzes the ATP-dependent conversion of formylglycinamide ribonucleotide (FGAR) and glutamine to yield formylglycinamidine ribonucleotide (FGAM) and glutamate. The FGAM synthase complex is composed of three subunits. PurQ produces an ammonia molecule by converting glutamine to glutamate. PurL transfers the ammonia molecule to FGAR to form FGAM in an ATP-dependent manner. PurS interacts with PurQ and PurL and is thought to assist in the transfer of the ammonia molecule from PurQ to PurL. The chain is Phosphoribosylformylglycinamidine synthase subunit PurQ from Rhizobium meliloti (strain 1021) (Ensifer meliloti).